The chain runs to 403 residues: MELRVGNRYRLGRKIGSGSFGDIYLGTDITTGEEVAIKLECVKTKHPQLHIESKIYKMMQGGVGIPTIKWCGAEGDYNVMVMELLGPSLEDLFNFCSRKFSLKTVLLLADQMISRIEYIHSKNFIHRDVKPDNFLMGLGKKGNLVYIIDFGLAKKYRDARTHQHIPYRENKNLTGTARYASINTHLGIEQSRRDDLESLGYVLMYFNLGSLPWQGLKAATKRQKYERISEKKMSTPIEVLCKGYPSEFATYLNFCRSLRFDDKPDYSYLRQLFRNLFHRQGFSYDYVFDWNMLKFGGAREDPERDRRDREERIRQGRIPLPRVMLPTSSGRPRGTQEVAPAPPLTPDSHTGMERERKVSMRLHRGAPVNVSSSDLTGRQDCSRISTSQAHSRVPSGLQSAVPR.

The Protein kinase domain occupies 9–277 (YRLGRKIGSG…YLRQLFRNLF (269 aa)). ATP contacts are provided by residues 15–23 (IGSGSFGDI) and Lys-38. Asp-128 serves as the catalytic Proton acceptor. An autoinhibitory region spans residues 315 to 340 (QGRIPLPRVMLPTSSGRPRGTQEVAP). A disordered region spans residues 322–403 (RVMLPTSSGR…PSGLQSAVPR (82 aa)).

Belongs to the protein kinase superfamily. Monomer. Interacts with per1 and per2. Component of the circadian core oscillator. In terms of processing, autophosphorylated on serine and threonine residues.

The protein localises to the cytoplasm. It localises to the nucleus. The enzyme catalyses L-seryl-[protein] + ATP = O-phospho-L-seryl-[protein] + ADP + H(+). It catalyses the reaction L-threonyl-[protein] + ATP = O-phospho-L-threonyl-[protein] + ADP + H(+). Exhibits substrate-dependent heparin activation. Its function is as follows. Casein kinases are operationally defined by their preferential utilization of acidic proteins such as caseins as substrates. Central component of the circadian clock. May act as a negative regulator of circadian rhythmicity by phosphorylating per1 and per2, which may lead to their degradation. Participates in wnt signaling. The sequence is that of Casein kinase I isoform delta-A (csnk1da) from Danio rerio (Zebrafish).